We begin with the raw amino-acid sequence, 234 residues long: 2-C-methyl-D-erythritol 4-phosphate cytidylyltransferase (234 aa).

It belongs to the IspD/TarI cytidylyltransferase family. IspD subfamily.

It catalyses the reaction 2-C-methyl-D-erythritol 4-phosphate + CTP + H(+) = 4-CDP-2-C-methyl-D-erythritol + diphosphate. The protein operates within isoprenoid biosynthesis; isopentenyl diphosphate biosynthesis via DXP pathway; isopentenyl diphosphate from 1-deoxy-D-xylulose 5-phosphate: step 2/6. Its function is as follows. Catalyzes the formation of 4-diphosphocytidyl-2-C-methyl-D-erythritol from CTP and 2-C-methyl-D-erythritol 4-phosphate (MEP). The chain is 2-C-methyl-D-erythritol 4-phosphate cytidylyltransferase from Pseudomonas paraeruginosa (strain DSM 24068 / PA7) (Pseudomonas aeruginosa (strain PA7)).